Consider the following 184-residue polypeptide: Tumor necrosis factor alpha-induced protein 8-like protein 2 (184 aa).

The residue at position 3 (serine 3) is a Phosphoserine.

This sequence belongs to the TNFAIP8 family. TNFAIP8L2 subfamily. In terms of assembly, may interact with CASP8; however, such result is unclear since could not reproduce the interaction with CASP8. Interacts with RAC1. In terms of processing, phosphorylated by TAK1/MAP3K7; this phosphorylation triggers association with BTRC and subsequent ubiquitination and degradation. Ubiquitinated in a BTRC-depdent manner; leading to degradation mediated through the proteasome pathway.

It localises to the cytoplasm. It is found in the nucleus. Its subcellular location is the lysosome. Acts as a negative regulator of innate and adaptive immunity by maintaining immune homeostasis. Plays a regulatory role in the Toll-like signaling pathway by determining the strength of LPS-induced signaling and gene expression. Inhibits TCR-mediated T-cell activation and negatively regulate T-cell function to prevent hyperresponsiveness. Also inhibits autolysosome formation via negatively modulating MTOR activation by interacting with RAC1 and promoting the disassociation of the RAC1-MTOR complex. Plays an essential role in NK-cell biology by acting as a checkpoint and displaying an expression pattern correlating with NK-cell maturation process and by negatively regulating NK-cell maturation and antitumor immunity. Mechanistically, suppresses IL-15-triggered mTOR activity in NK-cells. In Callithrix jacchus (White-tufted-ear marmoset), this protein is Tumor necrosis factor alpha-induced protein 8-like protein 2 (TNFAIP8L2).